Here is a 520-residue protein sequence, read N- to C-terminus: MDIITIIIAVIAGIGGGFGISKFLEKSGVSNLIKNAKKEASSILKDANLEGENIKKDKILQAKEKFIELKSEHEQVILTRDRKVAEVEKRVRDKESQVSGELSKAKKINDDFEAKTNEYNTKLENLEKKQVEVEKMHKSQLQQLEVISGLSTEEAKNQLIEGLKSEAKTQAMAHIQETIEEAKLTAQQEAKKIIISTIQRVGTEEAVENCVSVFNIESDDVKGRIIGREGRNIRAIEAATGVEIIVDDTPEAIILSCFDPVRREIARLALHKLVTDGRIHPARIEEVVAKTTKQIDDEIIEVGKRTVIDLGIHGLHPELIKVVGRMKYRSSYGQNLLQHSREVSKLCGIMAAELGLNVKLAKRAGLLHDIGKVPDAESDLPHALLGMQWAEKYGEKEEVCNAIGAHHDEIEMKSLLSPIVQVCDAISGARPGARRQVLDSYIQRLKDLEEVAYGFNGVKSAYAIQAGRELRVIVESEKVSDDNASNLSFEISQKIQTEMTYPGQVKVTVIRETRAVNIAK.

A helical membrane pass occupies residues 1–21; that stretch reads MDIITIIIAVIAGIGGGFGIS. A KH domain is found at 210 to 276; it reads CVSVFNIESD…RLALHKLVTD (67 aa). The 94-residue stretch at 336–429 folds into the HD domain; the sequence is LLQHSREVSK…VQVCDAISGA (94 aa).

This sequence belongs to the RNase Y family.

The protein resides in the cell membrane. Functionally, endoribonuclease that initiates mRNA decay. The chain is Ribonuclease Y from Flavobacterium psychrophilum (strain ATCC 49511 / DSM 21280 / CIP 103535 / JIP02/86).